The chain runs to 391 residues: Adaptive-response sensory kinase SasA (391 aa).

Residues 169 to 391 (MLAHDLRSPL…CFHFTLPVCR (223 aa)) form the Histidine kinase domain. H172 carries the phosphohistidine; by autocatalysis modification.

Homooligomerizes. Interacts with KaiC. Participates in the KaiABC clock complex, whose core is composed of a KaiC homohexamer, 6 KaiB and up to 6 KaiA dimers. SasA and KaiB(fs) compete to bind to KaiC.

It carries out the reaction ATP + protein L-histidine = ADP + protein N-phospho-L-histidine.. Member of the two-component regulatory system SasA/RpaA involved in genome-wide circadian gene expression. One of several clock output pathways. Participates in the Kai clock protein complex, the main circadian regulator in cyanobacteria, via its interaction with KaiC. KaiC enhances the autophosphorylation activity of SasA, which then transfers its phosphate group to RpaA to activate it. In addition to its output function, recruits fold-shifted KaiB (KaiB(fs)) to KaiC to cooperatively form the KaiB(6):KaiC(6) complex (independent of SasA kinase activity). Required for robustness of the circadian rhythm of gene expression and is involved in clock output, also required for adaptation to light/dark cycles. The polypeptide is Adaptive-response sensory kinase SasA (Rippkaea orientalis (strain PCC 8801 / RF-1) (Cyanothece sp. (strain PCC 8801))).